The following is a 732-amino-acid chain: MGRKEDNIEKALKIVEHTELIRNIGIVAHIDHGKTTLSDNLIAGAGMMSEELAGKQLVLDYDEQEQARGITINAAVASMVHTFQGKEYLINLIDTPGHVDFGGDVTRAMRAVDGVIVVVDSVEGVMPQTETVIRQALREHVKPVLFINKIDRLINELRLNSDEMQKRFTKIITDVNRLISKYAPQQFTKEWQVSVQDGRVAFGSAYNNWAISIPAMAETKITFKDIVEYVKNGKQKELAQKNQLHKIILNMVIRHLPDPKTAQSYRIKQIWKGDLDSEIGKAMINCDYKGPVAMMVTKIIIDPHAGEIAIGRLFSGTVKKGTDLYISGAGKGKVQTLAMMVGPDRIPVDEITAGNIAAIVGLKGAIAGATVSSLENMVPFEPMIHYSEPVVTLAIEAKHTADLPRLIEVLRDISKADPSIQVDINQETGEHLISGMGELHLDVTLYRIKNDYKVEVETSDPIVVYRETVEKKGGPFEGKSPNKHNRFYFEVEPLKPEVIQAIEDGDIPQGSKFKDKKALVELLVSKGIDRDEAKGLVCVEGTNMMFDVTRGIQYLDETMELLIEAFVEVMNRGPLANEKVFGVKARLVDAKLHEDSIHRGPAQVIPAGRNSIYGAMCEAKRVLLEPVQRVFINVPQEEMGAAINEIQQRRGIIEDMKQEGDEISLTAKVPVAGMFGFASAIRGATGGKVLWSFENAGYQKVPPELQDSIVRSIRERKGLRQEPYDADYYASM.

The 210-residue stretch at 19-228 (ELIRNIGIVA…TKITFKDIVE (210 aa)) folds into the tr-type G domain. GTP-binding positions include 28-35 (AHIDHGKT), 94-98 (DTPGH), and 148-151 (NKID). His-598 is modified (diphthamide).

This sequence belongs to the TRAFAC class translation factor GTPase superfamily. Classic translation factor GTPase family. EF-G/EF-2 subfamily.

The protein localises to the cytoplasm. Its function is as follows. Catalyzes the GTP-dependent ribosomal translocation step during translation elongation. During this step, the ribosome changes from the pre-translocational (PRE) to the post-translocational (POST) state as the newly formed A-site-bound peptidyl-tRNA and P-site-bound deacylated tRNA move to the P and E sites, respectively. Catalyzes the coordinated movement of the two tRNA molecules, the mRNA and conformational changes in the ribosome. This Thermoplasma acidophilum (strain ATCC 25905 / DSM 1728 / JCM 9062 / NBRC 15155 / AMRC-C165) protein is Elongation factor 2 (fusA).